Consider the following 586-residue polypeptide: Alpha-1,2-mannosyltransferase MNN5 (586 aa).

The signal sequence occupies residues 1–29 (MLIRLKKRKILQVIVSAVVLILFFCSVHN). Asn113, Asn136, Asn259, and Asn264 each carry an N-linked (GlcNAc...) asparagine glycan.

The protein belongs to the MNN1/MNT family. Post-translationally, glycosylated.

It is found in the golgi apparatus. It localises to the cis-Golgi network. It functions in the pathway protein modification; protein glycosylation. Its function is as follows. Responsible for addition of first and second mannose residues to the outer chain of core N-linked polysaccharides and to O-linked mannotriose. Implicated in late Golgi modifications. This is Alpha-1,2-mannosyltransferase MNN5 (MNN5) from Saccharomyces cerevisiae (strain YJM789) (Baker's yeast).